Consider the following 601-residue polypeptide: Jacalin-related lectin 3 (601 aa).

3 consecutive Jacalin-type lectin domains span residues 13 to 155, 240 to 382, and 438 to 583; these read PASL…HTQP, AKTY…HVME, and PSGP…HMQH.

It belongs to the jacalin lectin family.

This chain is Jacalin-related lectin 3 (JAL3), found in Arabidopsis thaliana (Mouse-ear cress).